The following is a 192-amino-acid chain: Ion-translocating oxidoreductase complex subunit B (192 aa).

Residues 1-26 (MNAIWIAVAAVSLLALAFGAILGYAS) are hydrophobic. Positions 32–91 (EDDPVVEKIDEILPQSQCGQCGYPGCRPYAEAISCNGEKINRCAPGGEAVMLKIAELLNV) constitute a 4Fe-4S domain. Positions 49, 52, 57, 74, 117, 120, 123, 127, 147, 150, 153, and 157 each coordinate [4Fe-4S] cluster. 4Fe-4S ferredoxin-type domains follow at residues 108-137 (MVAV…GATR) and 138-167 (AMHT…LQPV).

This sequence belongs to the 4Fe4S bacterial-type ferredoxin family. RnfB subfamily. In terms of assembly, the complex is composed of six subunits: RsxA, RsxB, RsxC, RsxD, RsxE and RsxG. [4Fe-4S] cluster is required as a cofactor.

The protein resides in the cell inner membrane. In terms of biological role, part of a membrane-bound complex that couples electron transfer with translocation of ions across the membrane. Required to maintain the reduced state of SoxR. The chain is Ion-translocating oxidoreductase complex subunit B from Escherichia coli O81 (strain ED1a).